Here is a 275-residue protein sequence, read N- to C-terminus: Diaminopimelate epimerase (275 aa).

The substrate site is built by asparagine 13, glutamine 46, and asparagine 66. Cysteine 75 acts as the Proton donor in catalysis. Residues glycine 76 to asparagine 77, asparagine 159, asparagine 192, and glutamate 210 to arginine 211 each bind substrate. Cysteine 219 (proton acceptor) is an active-site residue. Glycine 220–threonine 221 is a substrate binding site.

This sequence belongs to the diaminopimelate epimerase family. In terms of assembly, homodimer.

It is found in the cytoplasm. The enzyme catalyses (2S,6S)-2,6-diaminopimelate = meso-2,6-diaminopimelate. The protein operates within amino-acid biosynthesis; L-lysine biosynthesis via DAP pathway; DL-2,6-diaminopimelate from LL-2,6-diaminopimelate: step 1/1. In terms of biological role, catalyzes the stereoinversion of LL-2,6-diaminopimelate (L,L-DAP) to meso-diaminopimelate (meso-DAP), a precursor of L-lysine and an essential component of the bacterial peptidoglycan. In Psychromonas ingrahamii (strain DSM 17664 / CCUG 51855 / 37), this protein is Diaminopimelate epimerase.